A 336-amino-acid chain; its full sequence is DNA-directed RNA polymerase subunit alpha (336 aa).

Residues 1–226 (MLIAQRPTLS…ELFGLARELN (226 aa)) are alpha N-terminal domain (alpha-NTD). An alpha C-terminal domain (alpha-CTD) region spans residues 241–336 (AALAADMALP…DDAAFSDDEL (96 aa)).

It belongs to the RNA polymerase alpha chain family. As to quaternary structure, homodimer. The RNAP catalytic core consists of 2 alpha, 1 beta, 1 beta' and 1 omega subunit. When a sigma factor is associated with the core the holoenzyme is formed, which can initiate transcription.

The catalysed reaction is RNA(n) + a ribonucleoside 5'-triphosphate = RNA(n+1) + diphosphate. Its function is as follows. DNA-dependent RNA polymerase catalyzes the transcription of DNA into RNA using the four ribonucleoside triphosphates as substrates. The polypeptide is DNA-directed RNA polymerase subunit alpha (Arthrobacter sp. (strain FB24)).